A 66-amino-acid polypeptide reads, in one-letter code: Large ribosomal subunit protein bL33c (66 aa).

Belongs to the bacterial ribosomal protein bL33 family.

The protein localises to the plastid. It is found in the chloroplast. The chain is Large ribosomal subunit protein bL33c from Gossypium barbadense (Sea Island cotton).